We begin with the raw amino-acid sequence, 351 residues long: MTQQNFVELKNVTKRFGNNTVIDNLELSIPQGHMVTLLGPSGCGKTTVLRLVAGLEKPSAGKIFIDGEDVTDRSIQQRDICMVFQSYALFPHMSLGENIGYGLKMLGQPKAEIRERVKEALELVDLGGFEDRYVDQISGGQQQRVALARALILKPKVLLFDEPLSNLDANLRRSMREKIRELQQQFNITSLYVTHDQSEAFAVSDAVLVMNKGKIMQIGTPQTLYRQPASEFMASFMGDANIFPATLATDYVEIFQYRLPRPANFTTNRQSVTVGVRPEAITLSRNGNISQRCTISHVAYMGPQYEVTVDWQGQTLLLQINATQLQPDVGDNYYLEIHPFGMFILTEKNSG.

The ABC transporter domain maps to 7–237 (VELKNVTKRF…PASEFMASFM (231 aa)). 39 to 46 (GPSGCGKT) is an ATP binding site.

It belongs to the ABC transporter superfamily. Fe(3+) ion importer (TC 3.A.1.10) family. The complex is composed of two ATP-binding proteins (FbpC), two transmembrane proteins (FbpB) and a solute-binding protein (FbpA).

Its subcellular location is the cell inner membrane. The enzyme catalyses Fe(3+)(out) + ATP + H2O = Fe(3+)(in) + ADP + phosphate + H(+). Its function is as follows. Part of the ABC transporter complex FbpABC involved in Fe(3+) ions import. Responsible for energy coupling to the transport system. This chain is Fe(3+) ions import ATP-binding protein FbpC, found in Photorhabdus laumondii subsp. laumondii (strain DSM 15139 / CIP 105565 / TT01) (Photorhabdus luminescens subsp. laumondii).